The following is a 313-amino-acid chain: Leucine-rich repeat-containing protein 52 (313 aa).

An N-terminal signal peptide occupies residues 1–23; it reads MSLASGPGPGWLLFSFGMGLVSG. One can recognise an LRRNT domain in the interval 24–53; sequence SKCPNNCLCQAQEVICTGKQLTEYPLDIPL. Topologically, residues 24–244 are extracellular; that stretch reads SKCPNNCLCQ…MCITHLDHKD (221 aa). Cystine bridges form between Cys26–Cys32 and Cys30–Cys39. LRR repeat units lie at residues 54–75, 78–99, 102–123, 126–148, and 151–172; these read NTRR…HLGL, DLVY…TFIG, KLIY…TFSV, NLVQ…TFAN, and SLRY…ALYH. Asn112 and Asn148 each carry an N-linked (GlcNAc...) asparagine glycan. Residues 184–238 enclose the LRRCT domain; the sequence is NPWKCNCSFLDFAIFLIVFHMDPSDDLNATCVEPTELTGWPITRVGNPLRYMCIT. Disulfide bonds link Cys188–Cys214 and Cys190–Cys236. N-linked (GlcNAc...) asparagine glycosylation is found at Asn189 and Asn211. The chain crosses the membrane as a helical span at residues 245 to 265; it reads YIFLLLIGFCIFAAGTVAAWL. Topologically, residues 266–313 are cytoplasmic; that stretch reads TGVCAVLYQNTRHKSSEEDEDEAGTRVEVSRRIFQTQTSSVQEFPQLI.

May interact with KCNU1; this interaction may be required for LRRC52 stability and may change the channel gating properties. Interacts with KCNMA1. Post-translationally, N-glycosylated. Mainly expressed in testis and skeletal muscle.

It localises to the cell membrane. Its function is as follows. Auxiliary protein of the large-conductance, voltage and calcium-activated potassium channel (BK alpha). Modulates gating properties by producing a marked shift in the BK channel's voltage dependence of activation in the hyperpolarizing direction, and in the absence of calcium. KCNU1 channel auxiliary protein. Modulates KCNU1 gating properties. The chain is Leucine-rich repeat-containing protein 52 (LRRC52) from Homo sapiens (Human).